The following is a 407-amino-acid chain: Arrestin homolog (407 aa).

Belongs to the arrestin family.

The protein is Arrestin homolog of Locusta migratoria (Migratory locust).